Reading from the N-terminus, the 210-residue chain is Ribonuclease HII (210 aa).

The RNase H type-2 domain maps to 18–207 (RFVAGVDEVG…VHKILCKEET (190 aa)). 3 residues coordinate a divalent metal cation: aspartate 24, glutamate 25, and aspartate 115.

The protein belongs to the RNase HII family. The cofactor is Mn(2+). Mg(2+) serves as cofactor.

It is found in the cytoplasm. It carries out the reaction Endonucleolytic cleavage to 5'-phosphomonoester.. Endonuclease that specifically degrades the RNA of RNA-DNA hybrids. The protein is Ribonuclease HII of Paracoccus denitrificans (strain Pd 1222).